Reading from the N-terminus, the 766-residue chain is MVTLMPYNYAAPRCGLIDKMIEPKVKRPKTDHTDTHERNRLCNLSQQQQQQQPQQQQTHQQQQQQQQQSHQQSHSSTVLASNGPSSAGAGMGVGVGGGGGSGGGVGGGVGQCSPLGLPPQSQPLQPTIGSLASLSGHYSNGNANPNVNSSSCSLATASSFAQSAGSSFSTYQQAGGTSGGVSGEDGVVGGATVMSHWTHDGTGSSAAVKSESRSPGQVHASLDNGSVAGSNLYGCSSASNPLDGGAVAVNSSAVAAAAAAVYDGKHDYYYYNSMQQYTPPPFYSGYGTPYAAATAARQAKMEPGAAAAAAAYLTPSYAASGNNNSQLYSSPYAGYNNFGQQDYGGYYNEQYGNYYSPANYSPYAVSSPSSSASHGHGFHVAASSNLSESPTDTHSTTPVHQTTHSPHSPLPISPSTGSGIGPLGNVSAAAAAAALNSSGGSSVGTAGSGGVATSKTTPTGKTGRARGRRHQQPSPTRSTASDTGNSEAVKPPERVFVWDLDETLIIFHTLLSGSYANRYTKDHSSLMTIAFRMEEMVFNMADTHFFFNEIEECDQVHIDDVSSDDNGQDLSAYNFATDGFHTNTPPGAPPNLCLPTGVRGGVDWMRKLAFRYRKIKDIYNSYRGNVGTLLGPGKREAWLQIRSEIEVATDNWATLALKCLSMISQRENCVNVLVTSTQLAPALAKVLLFGLGGIFNIENIYSAHKIGHETCYERIVTRFGRKSTYVVIGDGNEEETAAKAMNFPFWRISAHSDIRALYTALDMGFL.

The segment covering E22–R40 has biased composition (basic and acidic residues). 4 disordered regions span residues E22–L131, D200–D223, V365–G419, and S437–V489. Low complexity predominate over residues S45–S76. Residues A89–G110 show a composition bias toward gly residues. Residues V365–S384 show a composition bias toward low complexity. 2 stretches are compositionally biased toward polar residues: residues N385–Q401 and Q472–S486. The active-site Nucleophile is the D499. Residues D499, D501, and D730 each contribute to the Mg(2+) site. Residue D501 is the Proton donor of the active site.

The protein belongs to the HAD-like hydrolase superfamily. EYA family. As to quaternary structure, interacts with Dac and So. The cofactor is Mg(2+).

Its subcellular location is the nucleus. It catalyses the reaction O-phospho-L-tyrosyl-[protein] + H2O = L-tyrosyl-[protein] + phosphate. Functionally, tyrosine phosphatase thought to play a role in transcription regulation during organogenesis through its intrinsic protein phosphatase activity. The phosphatase activity was shown in vitro. Appears to function together with So and Dac in eye development. Required for the survival of eye progenitor cells at a critical stage in morphogenesis. This Drosophila melanogaster (Fruit fly) protein is Protein phosphatase eya (eya).